A 138-amino-acid chain; its full sequence is Superoxide dismutase [Mn] (138 aa).

4 residues coordinate Mn(2+): His1, His49, Asp133, and His137.

Belongs to the iron/manganese superoxide dismutase family. Requires Mn(2+) as cofactor.

The catalysed reaction is 2 superoxide + 2 H(+) = H2O2 + O2. Functionally, destroys superoxide anion radicals which are normally produced within the cells and which are toxic to biological systems. This chain is Superoxide dismutase [Mn] (sodA), found in Mycobacterium celatum.